A 704-amino-acid polypeptide reads, in one-letter code: Ribosomal RNA large subunit methyltransferase K/L (704 aa).

The region spanning 43 to 154 is the THUMP domain; the sequence is TMYQSLLWSR…KEKASLSLDL (112 aa).

Belongs to the methyltransferase superfamily. RlmKL family.

The protein localises to the cytoplasm. It catalyses the reaction guanosine(2445) in 23S rRNA + S-adenosyl-L-methionine = N(2)-methylguanosine(2445) in 23S rRNA + S-adenosyl-L-homocysteine + H(+). The catalysed reaction is guanosine(2069) in 23S rRNA + S-adenosyl-L-methionine = N(2)-methylguanosine(2069) in 23S rRNA + S-adenosyl-L-homocysteine + H(+). In terms of biological role, specifically methylates the guanine in position 2445 (m2G2445) and the guanine in position 2069 (m7G2069) of 23S rRNA. In Proteus mirabilis (strain HI4320), this protein is Ribosomal RNA large subunit methyltransferase K/L.